The primary structure comprises 236 residues: Small ribosomal subunit protein uS2c (236 aa).

It belongs to the universal ribosomal protein uS2 family.

It is found in the plastid. The protein resides in the chloroplast. This chain is Small ribosomal subunit protein uS2c (rps2), found in Daucus carota (Wild carrot).